Consider the following 153-residue polypeptide: Aspartate carbamoyltransferase regulatory chain (153 aa).

Zn(2+) contacts are provided by Cys-109, Cys-114, Cys-138, and Cys-141.

It belongs to the PyrI family. Contains catalytic and regulatory chains. The cofactor is Zn(2+).

Involved in allosteric regulation of aspartate carbamoyltransferase. The polypeptide is Aspartate carbamoyltransferase regulatory chain (Wigglesworthia glossinidia brevipalpis).